We begin with the raw amino-acid sequence, 498 residues long: Fascin-3 (498 aa).

Belongs to the fascin family. As to expression, expressed in testis.

The protein localises to the cytoplasm. It localises to the cytoskeleton. In terms of biological role, acts as an actin bundling protein. This is Fascin-3 (Fscn3) from Mus musculus (Mouse).